Reading from the N-terminus, the 561-residue chain is Urocanate hydratase (561 aa).

Residues 52–53 (GG), Gln130, 176–178 (GMG), Glu196, Arg201, 242–243 (NA), 267–271 (QTSAH), 277–278 (YL), and Tyr326 contribute to the NAD(+) site. The active site involves Cys414. An NAD(+)-binding site is contributed by Gly496.

The protein belongs to the urocanase family. NAD(+) serves as cofactor.

Its subcellular location is the cytoplasm. It carries out the reaction 4-imidazolone-5-propanoate = trans-urocanate + H2O. Its pathway is amino-acid degradation; L-histidine degradation into L-glutamate; N-formimidoyl-L-glutamate from L-histidine: step 2/3. Its function is as follows. Catalyzes the conversion of urocanate to 4-imidazolone-5-propionate. This is Urocanate hydratase from Rhizobium rhizogenes (strain K84 / ATCC BAA-868) (Agrobacterium radiobacter).